The sequence spans 820 residues: Penicillin-binding protein 1A (820 aa).

The tract at residues Met1 to Val120 is disordered. A compositionally biased stretch (basic and acidic residues) spans Thr41–Glu53. Residues Leu139–Val159 traverse the membrane as a helical segment. Residues Gly180–Val360 form a transglycosylase region. The active-site Proton donor; for transglycosylase activity is Glu213. Positions Ala453–Asp743 are transpeptidase. The active-site Acyl-ester intermediate; for transpeptidase activity is the Ser487. Positions Ile792–Leu804 are enriched in low complexity. The disordered stretch occupies residues Ile792 to Pro820. Over residues Ala805 to Pro820 the composition is skewed to pro residues.

This sequence in the N-terminal section; belongs to the glycosyltransferase 51 family. In the C-terminal section; belongs to the transpeptidase family. As to quaternary structure, interacts with RipA via its transpeptidase domain (residues 561-820).

Its subcellular location is the cell membrane. The catalysed reaction is [GlcNAc-(1-&gt;4)-Mur2Ac(oyl-L-Ala-gamma-D-Glu-L-Lys-D-Ala-D-Ala)](n)-di-trans,octa-cis-undecaprenyl diphosphate + beta-D-GlcNAc-(1-&gt;4)-Mur2Ac(oyl-L-Ala-gamma-D-Glu-L-Lys-D-Ala-D-Ala)-di-trans,octa-cis-undecaprenyl diphosphate = [GlcNAc-(1-&gt;4)-Mur2Ac(oyl-L-Ala-gamma-D-Glu-L-Lys-D-Ala-D-Ala)](n+1)-di-trans,octa-cis-undecaprenyl diphosphate + di-trans,octa-cis-undecaprenyl diphosphate + H(+). The enzyme catalyses Preferential cleavage: (Ac)2-L-Lys-D-Ala-|-D-Ala. Also transpeptidation of peptidyl-alanyl moieties that are N-acyl substituents of D-alanine.. Its pathway is cell wall biogenesis; peptidoglycan biosynthesis. Functionally, cell wall formation. Synthesis of cross-linked peptidoglycan from the lipid intermediates. The enzyme has a penicillin-insensitive transglycosylase N-terminal domain (formation of linear glycan strands) and a penicillin-sensitive transpeptidase C-terminal domain (cross-linking of the peptide subunits). Has little peptidoglycan hydrolytic activity; however it inhibits the synergistic peptidoglycan hydrolysis of RipA plus RpfB. The polypeptide is Penicillin-binding protein 1A (ponA1) (Mycobacterium tuberculosis (strain ATCC 25618 / H37Rv)).